A 464-amino-acid chain; its full sequence is Argininosuccinate lyase (464 aa).

Belongs to the lyase 1 family. Argininosuccinate lyase subfamily.

Its subcellular location is the cytoplasm. The catalysed reaction is 2-(N(omega)-L-arginino)succinate = fumarate + L-arginine. It functions in the pathway amino-acid biosynthesis; L-arginine biosynthesis; L-arginine from L-ornithine and carbamoyl phosphate: step 3/3. The sequence is that of Argininosuccinate lyase from Pseudomonas aeruginosa (strain LESB58).